Here is a 270-residue protein sequence, read N- to C-terminus: Ribonuclease HII (270 aa).

Positions 28-222 (RQVAGADEAG…VSGRQGAPPR (195 aa)) constitute an RNase H type-2 domain. Residues Asp-34, Glu-35, and Asp-128 each contribute to the a divalent metal cation site.

Belongs to the RNase HII family. It depends on Mn(2+) as a cofactor. Mg(2+) serves as cofactor.

Its subcellular location is the cytoplasm. It carries out the reaction Endonucleolytic cleavage to 5'-phosphomonoester.. In terms of biological role, endonuclease that specifically degrades the RNA of RNA-DNA hybrids. This Salinispora tropica (strain ATCC BAA-916 / DSM 44818 / JCM 13857 / NBRC 105044 / CNB-440) protein is Ribonuclease HII.